A 396-amino-acid chain; its full sequence is NADH-quinone oxidoreductase subunit D 2 (396 aa).

Belongs to the complex I 49 kDa subunit family. In terms of assembly, NDH-1 is composed of 14 different subunits. Subunits NuoB, C, D, E, F, and G constitute the peripheral sector of the complex.

Its subcellular location is the cell inner membrane. The catalysed reaction is a quinone + NADH + 5 H(+)(in) = a quinol + NAD(+) + 4 H(+)(out). NDH-1 shuttles electrons from NADH, via FMN and iron-sulfur (Fe-S) centers, to quinones in the respiratory chain. The immediate electron acceptor for the enzyme in this species is believed to be ubiquinone. Couples the redox reaction to proton translocation (for every two electrons transferred, four hydrogen ions are translocated across the cytoplasmic membrane), and thus conserves the redox energy in a proton gradient. This chain is NADH-quinone oxidoreductase subunit D 2, found in Beijerinckia indica subsp. indica (strain ATCC 9039 / DSM 1715 / NCIMB 8712).